A 156-amino-acid polypeptide reads, in one-letter code: Ribosomal RNA large subunit methyltransferase H (156 aa).

Residues Leu73, Gly104, and 123 to 128 (LSPLTL) each bind S-adenosyl-L-methionine.

Belongs to the RNA methyltransferase RlmH family. In terms of assembly, homodimer.

Its subcellular location is the cytoplasm. The catalysed reaction is pseudouridine(1915) in 23S rRNA + S-adenosyl-L-methionine = N(3)-methylpseudouridine(1915) in 23S rRNA + S-adenosyl-L-homocysteine + H(+). Specifically methylates the pseudouridine at position 1915 (m3Psi1915) in 23S rRNA. The protein is Ribosomal RNA large subunit methyltransferase H of Marinobacter nauticus (strain ATCC 700491 / DSM 11845 / VT8) (Marinobacter aquaeolei).